The following is a 933-amino-acid chain: C-1-tetrahydrofolate synthase, cytoplasmic (933 aa).

Positions 1 to 303 (MWEPQGSLDP…DRLLAPTWPL (303 aa)) are methylenetetrahydrofolate dehydrogenase and cyclohydrolase. Substrate contacts are provided by residues 51–55 (YIRMK) and 98–100 (VQM). Residues 170-172 (GRS) and S195 each bind NADP(+). 270–274 (PGGVG) provides a ligand contact to substrate. The tract at residues 304 to 933 (RPLRITPLSP…TKTGEIEGLF (630 aa)) is formyltetrahydrofolate synthetase. ATP is bound at residue 378–385 (TPLGEGKS).

In the N-terminal section; belongs to the tetrahydrofolate dehydrogenase/cyclohydrolase family. It in the C-terminal section; belongs to the formate--tetrahydrofolate ligase family. As to quaternary structure, homodimer.

The protein resides in the cytoplasm. It carries out the reaction (6R)-5,10-methylene-5,6,7,8-tetrahydrofolate + NADP(+) = (6R)-5,10-methenyltetrahydrofolate + NADPH. It catalyses the reaction (6R)-5,10-methenyltetrahydrofolate + H2O = (6R)-10-formyltetrahydrofolate + H(+). The enzyme catalyses (6S)-5,6,7,8-tetrahydrofolate + formate + ATP = (6R)-10-formyltetrahydrofolate + ADP + phosphate. It functions in the pathway one-carbon metabolism; tetrahydrofolate interconversion. This chain is C-1-tetrahydrofolate synthase, cytoplasmic, found in Spodoptera frugiperda (Fall armyworm).